The following is a 237-amino-acid chain: Phosphoribosylaminoimidazole-succinocarboxamide synthase (237 aa).

It belongs to the SAICAR synthetase family.

It carries out the reaction 5-amino-1-(5-phospho-D-ribosyl)imidazole-4-carboxylate + L-aspartate + ATP = (2S)-2-[5-amino-1-(5-phospho-beta-D-ribosyl)imidazole-4-carboxamido]succinate + ADP + phosphate + 2 H(+). The protein operates within purine metabolism; IMP biosynthesis via de novo pathway; 5-amino-1-(5-phospho-D-ribosyl)imidazole-4-carboxamide from 5-amino-1-(5-phospho-D-ribosyl)imidazole-4-carboxylate: step 1/2. The polypeptide is Phosphoribosylaminoimidazole-succinocarboxamide synthase (Serratia proteamaculans (strain 568)).